Reading from the N-terminus, the 243-residue chain is DNA repair protein RecO (243 aa).

It belongs to the RecO family.

In terms of biological role, involved in DNA repair and RecF pathway recombination. The chain is DNA repair protein RecO from Bartonella quintana (strain Toulouse) (Rochalimaea quintana).